We begin with the raw amino-acid sequence, 24 residues long: Cytochrome c oxidase subunit 7A2, mitochondrial (24 aa).

Over residues 1 to 13 (FENKVPEKQKLFQ) the composition is skewed to basic and acidic residues. The disordered stretch occupies residues 1 to 24 (FENKVPEKQKLFQEDNGIPVHLKG). K10 is subject to N6-acetyllysine.

Belongs to the cytochrome c oxidase VIIa family. In terms of assembly, component of the cytochrome c oxidase (complex IV, CIV), a multisubunit enzyme composed of 14 subunits. The complex is composed of a catalytic core of 3 subunits MT-CO1, MT-CO2 and MT-CO3, encoded in the mitochondrial DNA, and 11 supernumerary subunits COX4I, COX5A, COX5B, COX6A, COX6B, COX6C, COX7A, COX7B, COX7C, COX8 and NDUFA4, which are encoded in the nuclear genome. The complex exists as a monomer or a dimer and forms supercomplexes (SCs) in the inner mitochondrial membrane with NADH-ubiquinone oxidoreductase (complex I, CI) and ubiquinol-cytochrome c oxidoreductase (cytochrome b-c1 complex, complex III, CIII), resulting in different assemblies (supercomplex SCI(1)III(2)IV(1) and megacomplex MCI(2)III(2)IV(2)). Interacts with PET100.

The protein resides in the mitochondrion inner membrane. It participates in energy metabolism; oxidative phosphorylation. Functionally, component of the cytochrome c oxidase, the last enzyme in the mitochondrial electron transport chain which drives oxidative phosphorylation. The respiratory chain contains 3 multisubunit complexes succinate dehydrogenase (complex II, CII), ubiquinol-cytochrome c oxidoreductase (cytochrome b-c1 complex, complex III, CIII) and cytochrome c oxidase (complex IV, CIV), that cooperate to transfer electrons derived from NADH and succinate to molecular oxygen, creating an electrochemical gradient over the inner membrane that drives transmembrane transport and the ATP synthase. Cytochrome c oxidase is the component of the respiratory chain that catalyzes the reduction of oxygen to water. Electrons originating from reduced cytochrome c in the intermembrane space (IMS) are transferred via the dinuclear copper A center (CU(A)) of subunit 2 and heme A of subunit 1 to the active site in subunit 1, a binuclear center (BNC) formed by heme A3 and copper B (CU(B)). The BNC reduces molecular oxygen to 2 water molecules using 4 electrons from cytochrome c in the IMS and 4 protons from the mitochondrial matrix. The chain is Cytochrome c oxidase subunit 7A2, mitochondrial (COX7A2) from Ovis aries (Sheep).